The primary structure comprises 180 residues: Large ribosomal subunit protein uL18m (180 aa).

The protein belongs to the universal ribosomal protein uL18 family. As to quaternary structure, component of the mitochondrial ribosome large subunit (39S) which comprises a 16S rRNA and about 50 distinct proteins.

The protein resides in the mitochondrion. Functionally, together with thiosulfate sulfurtransferase (TST), acts as a mitochondrial import factor for the cytosolic 5S rRNA. The precursor form shows RNA chaperone activity; is able to fold the 5S rRNA into an import-competent conformation that is recognized by rhodanese (TST). Both the cytoplasmic and mitochondrial forms are able to bind to the helix IV-loop D in the gamma domain of the 5S rRNA. This chain is Large ribosomal subunit protein uL18m (Mrpl18), found in Mus musculus (Mouse).